Reading from the N-terminus, the 109-residue chain is Large ribosomal subunit protein uL22 (109 aa).

This sequence belongs to the universal ribosomal protein uL22 family. Part of the 50S ribosomal subunit.

Functionally, this protein binds specifically to 23S rRNA; its binding is stimulated by other ribosomal proteins, e.g. L4, L17, and L20. It is important during the early stages of 50S assembly. It makes multiple contacts with different domains of the 23S rRNA in the assembled 50S subunit and ribosome. In terms of biological role, the globular domain of the protein is located near the polypeptide exit tunnel on the outside of the subunit, while an extended beta-hairpin is found that lines the wall of the exit tunnel in the center of the 70S ribosome. This chain is Large ribosomal subunit protein uL22, found in Polaromonas sp. (strain JS666 / ATCC BAA-500).